The following is a 247-amino-acid chain: Killer cell lectin-like receptor subfamily I member 2 (247 aa).

Positions 1–12 are enriched in basic and acidic residues; the sequence is MPRKKQNERGTN. Residues 1-39 form a disordered region; that stretch reads MPRKKQNERGTNKQEIINIETKSSTFQEKQRQSKTDQIS. Residues 1–79 are Cytoplasmic-facing; sequence MPRKKQNERG…GTDPWLTTWR (79 aa). The chain crosses the membrane as a helical span at residues 80–100; it reads IITVILGTSCIILVTKVGFLI. The Extracellular portion of the chain corresponds to 101–247; that stretch reads PNLFSRGEKR…KAYTCEFNLQ (147 aa). N-linked (GlcNAc...) asparagine glycans are attached at residues Asn125, Asn196, Asn212, and Asn218. Residues 139–243 form the C-type lectin domain; that stretch reads FGNNFYLFFR…CSSKKAYTCE (105 aa). 2 disulfide bridges follow: Cys160–Cys242 and Cys221–Cys234.

Heterodimer with KLRE1. As to expression, expressed in natural killer (NK) cells.

It localises to the cell membrane. In terms of biological role, lectin-like receptor for natural killer (NK) cells. Heterodimer formation with KLRE1 mediates NK cell cytolytic activity. The chain is Killer cell lectin-like receptor subfamily I member 2 from Rattus norvegicus (Rat).